A 67-amino-acid chain; its full sequence is DNA-directed RNA polymerase subunit omega (67 aa).

This sequence belongs to the RNA polymerase subunit omega family. In terms of assembly, the RNAP catalytic core consists of 2 alpha, 1 beta, 1 beta' and 1 omega subunit. When a sigma factor is associated with the core the holoenzyme is formed, which can initiate transcription.

It catalyses the reaction RNA(n) + a ribonucleoside 5'-triphosphate = RNA(n+1) + diphosphate. Its function is as follows. Promotes RNA polymerase assembly. Latches the N- and C-terminal regions of the beta' subunit thereby facilitating its interaction with the beta and alpha subunits. This is DNA-directed RNA polymerase subunit omega from Exiguobacterium sibiricum (strain DSM 17290 / CCUG 55495 / CIP 109462 / JCM 13490 / 255-15).